The following is an 80-amino-acid chain: Penaeidin-3 (80 aa).

The signal sequence occupies residues 1 to 19 (MRLVVCLVYLVSFALVCQG). At Gln-20 the chain carries Pyrrolidone carboxylic acid. 3 disulfides stabilise this stretch: Cys-54–Cys-67, Cys-57–Cys-74, and Cys-68–Cys-75.

This sequence belongs to the penaeidin family. In terms of processing, the N-terminus forms pyrrolidone carboxylic acid. In terms of tissue distribution, strongly expressed in hemocytes, and to a lesser extent in heart, muscle, gills, intestine and eyestalk. Lowest expression in hepatopancreas.

Its subcellular location is the cytoplasmic granule. Functionally, antibacterial and antifungal activity. Presents chitin-binding activity. The protein is Penaeidin-3 of Penaeus indicus (Indian white prawn).